A 363-amino-acid chain; its full sequence is Chalcone synthase B (363 aa).

C170 is an active-site residue.

The protein belongs to the thiolase-like superfamily. Chalcone/stilbene synthases family.

The enzyme catalyses (E)-4-coumaroyl-CoA + 3 malonyl-CoA + 3 H(+) = 2',4,4',6'-tetrahydroxychalcone + 3 CO2 + 4 CoA. It participates in secondary metabolite biosynthesis; flavonoid biosynthesis. Its function is as follows. The primary product of this enzyme is 4,2',4',6'-tetrahydroxychalcone (also termed naringenin-chalcone or chalcone) which can under specific conditions spontaneously isomerize into naringenin. The chain is Chalcone synthase B (CHSB) from Ipomoea nil (Japanese morning glory).